Consider the following 377-residue polypeptide: Glutamate 5-kinase (377 aa).

Lys21 contributes to the ATP binding site. Positions 61, 149, and 161 each coordinate substrate. ATP is bound by residues 181 to 182 (SD) and 223 to 229 (SGGMTSK). A PUA domain is found at 286–363 (RGSVQVDAGA…REHEELLGYA (78 aa)).

Belongs to the glutamate 5-kinase family.

It localises to the cytoplasm. The enzyme catalyses L-glutamate + ATP = L-glutamyl 5-phosphate + ADP. Its pathway is amino-acid biosynthesis; L-proline biosynthesis; L-glutamate 5-semialdehyde from L-glutamate: step 1/2. Its function is as follows. Catalyzes the transfer of a phosphate group to glutamate to form L-glutamate 5-phosphate. This is Glutamate 5-kinase from Novosphingobium aromaticivorans (strain ATCC 700278 / DSM 12444 / CCUG 56034 / CIP 105152 / NBRC 16084 / F199).